The primary structure comprises 466 residues: Ribulose bisphosphate carboxylase large chain (466 aa).

An N6,N6,N6-trimethyllysine modification is found at lysine 5. Substrate is bound by residues asparagine 114 and threonine 164. Lysine 166 serves as the catalytic Proton acceptor. Lysine 168 serves as a coordination point for substrate. Mg(2+)-binding residues include lysine 192, aspartate 194, and glutamate 195. An N6-carboxylysine modification is found at lysine 192. Histidine 285 functions as the Proton acceptor in the catalytic mechanism. The substrate site is built by arginine 286, histidine 318, and serine 370.

Belongs to the RuBisCO large chain family. Type I subfamily. Heterohexadecamer of 8 large chains and 8 small chains; disulfide-linked. The disulfide link is formed within the large subunit homodimers. Mg(2+) is required as a cofactor. The disulfide bond which can form in the large chain dimeric partners within the hexadecamer appears to be associated with oxidative stress and protein turnover.

It is found in the plastid. Its subcellular location is the chloroplast. It catalyses the reaction 2 (2R)-3-phosphoglycerate + 2 H(+) = D-ribulose 1,5-bisphosphate + CO2 + H2O. The catalysed reaction is D-ribulose 1,5-bisphosphate + O2 = 2-phosphoglycolate + (2R)-3-phosphoglycerate + 2 H(+). Its function is as follows. RuBisCO catalyzes two reactions: the carboxylation of D-ribulose 1,5-bisphosphate, the primary event in carbon dioxide fixation, as well as the oxidative fragmentation of the pentose substrate in the photorespiration process. Both reactions occur simultaneously and in competition at the same active site. This Averrhoa carambola (Star fruit) protein is Ribulose bisphosphate carboxylase large chain.